The sequence spans 101 residues: Small ribosomal subunit protein uS14 (101 aa).

The protein belongs to the universal ribosomal protein uS14 family. As to quaternary structure, part of the 30S ribosomal subunit. Contacts proteins S3 and S10.

Binds 16S rRNA, required for the assembly of 30S particles and may also be responsible for determining the conformation of the 16S rRNA at the A site. The sequence is that of Small ribosomal subunit protein uS14 from Aromatoleum aromaticum (strain DSM 19018 / LMG 30748 / EbN1) (Azoarcus sp. (strain EbN1)).